The primary structure comprises 234 residues: Phosphoglycolate phosphatase (234 aa).

The Nucleophile role is filled by Asp9. Positions 9 and 11 each coordinate Mg(2+). Lys162 is a substrate binding site. Residues Asp185 and Asp189 each coordinate Mg(2+).

The protein belongs to the archaeal SPP-like hydrolase family. Requires Mg(2+) as cofactor.

The catalysed reaction is 2-phosphoglycolate + H2O = glycolate + phosphate. Functionally, catalyzes the dephosphorylation of 2-phosphoglycolate. The polypeptide is Phosphoglycolate phosphatase (Methanobrevibacter smithii (strain ATCC 35061 / DSM 861 / OCM 144 / PS)).